We begin with the raw amino-acid sequence, 562 residues long: Putative transport protein YPA_0617 (562 aa).

The next 6 membrane-spanning stretches (helical) occupy residues 8–28 (LLNG…LCLG), 37–57 (LGNA…HFAI), 66–86 (FMLF…SIFF), 94–114 (MLAL…GKLF), 118–138 (IGLT…LVGA), and 158–178 (NLSL…ILGA). RCK C-terminal domains lie at 202-288 (LDTD…SFRN) and 290-373 (KEVF…KIGF). 5 consecutive transmembrane segments (helical) span residues 383–403 (LLAF…TFQF), 406–426 (FSFG…LGFL), 447–467 (FGLM…INSS), 475–495 (MLIS…VFGA), and 541–561 (IANV…PGIL).

Belongs to the AAE transporter (TC 2.A.81) family. YbjL subfamily.

It localises to the cell membrane. This chain is Putative transport protein YPA_0617, found in Yersinia pestis bv. Antiqua (strain Antiqua).